Consider the following 435-residue polypeptide: Putative F-box/FBD/LRR-repeat protein At5g56810 (435 aa).

Residues 14–62 (PDRISQLPNDLLFRILSLIPVSDAMSTSLLSKRWKSVWKMLPTLVYNEN) form the F-box domain. 6 LRR repeats span residues 64 to 95 (CSNIGSLGFDQFCGRSLQLHEAPLLKTLTLEL), 146 to 173 (LKLQGNICLDVVDSPVCFQSLKSLYLTC), 174 to 199 (VNFENEESFSKLLSACPVLEDLFLQR), 222 to 248 (KEQAYYSNDEAILEITAPSLKHLNIFD), 266 to 291 (SVRVKLSKNEKLPKVLTSVEHLSLDL), and 316 to 341 (YDNFQSNLLLSLLKDLPNLQSLKLNH). Positions 353-404 (CSVSEPSSVPECLSFHLETFQWIGYAGTFEEIAAAVYVLKNARCLKNATISL) constitute an FBD domain.

This is Putative F-box/FBD/LRR-repeat protein At5g56810 from Arabidopsis thaliana (Mouse-ear cress).